The primary structure comprises 296 residues: tRNA pseudouridine synthase B (296 aa).

The active-site Nucleophile is the D38.

It belongs to the pseudouridine synthase TruB family. Type 1 subfamily.

The catalysed reaction is uridine(55) in tRNA = pseudouridine(55) in tRNA. In terms of biological role, responsible for synthesis of pseudouridine from uracil-55 in the psi GC loop of transfer RNAs. This is tRNA pseudouridine synthase B from Synechocystis sp. (strain ATCC 27184 / PCC 6803 / Kazusa).